The chain runs to 291 residues: Popeye domain-containing protein 3 (291 aa).

N-linked (GlcNAc...) asparagine glycosylation is present at asparagine 4. A run of 3 helical transmembrane segments spans residues 27–44 (GAIYHLASILFVVGFMGG), 48–70 (FGLLYVFSLLGLGFLSSAVWAWV), and 77–99 (IFSWNFVLFVICFMQFVHIAYQV).

The protein belongs to the popeye family. Expressed in cardiac and skeletal muscle.

It localises to the membrane. In terms of biological role, may play a role in the maintenance of heart function mediated, at least in part, through cAMP-binding. May play a role in the regulation of KCNK2-mediated current amplitude. In Mus musculus (Mouse), this protein is Popeye domain-containing protein 3 (Popdc3).